A 37-amino-acid chain; its full sequence is Large ribosomal subunit protein bL36c (37 aa).

It belongs to the bacterial ribosomal protein bL36 family.

Its subcellular location is the plastid. It is found in the chloroplast. The chain is Large ribosomal subunit protein bL36c (rpl36) from Chlamydomonas reinhardtii (Chlamydomonas smithii).